We begin with the raw amino-acid sequence, 252 residues long: 5-oxoprolinase subunit A (252 aa).

The protein belongs to the LamB/PxpA family. As to quaternary structure, forms a complex composed of PxpA, PxpB and PxpC.

It catalyses the reaction 5-oxo-L-proline + ATP + 2 H2O = L-glutamate + ADP + phosphate + H(+). Functionally, catalyzes the cleavage of 5-oxoproline to form L-glutamate coupled to the hydrolysis of ATP to ADP and inorganic phosphate. The polypeptide is 5-oxoprolinase subunit A (Mycobacterium avium (strain 104)).